The following is a 191-amino-acid chain: Glycerol-3-phosphate acyltransferase (191 aa).

The next 5 membrane-spanning stretches (helical) occupy residues 5 to 25, 51 to 71, 78 to 98, 114 to 134, and 153 to 173; these read IILI…IAKI, LAVL…YTAQ, DLYI…PIWL, IALN…VFFI, and SFFF…LIFL.

Belongs to the PlsY family. In terms of assembly, probably interacts with PlsX.

It is found in the cell membrane. The enzyme catalyses an acyl phosphate + sn-glycerol 3-phosphate = a 1-acyl-sn-glycero-3-phosphate + phosphate. It participates in lipid metabolism; phospholipid metabolism. Catalyzes the transfer of an acyl group from acyl-phosphate (acyl-PO(4)) to glycerol-3-phosphate (G3P) to form lysophosphatidic acid (LPA). This enzyme utilizes acyl-phosphate as fatty acyl donor, but not acyl-CoA or acyl-ACP. The chain is Glycerol-3-phosphate acyltransferase from Wolbachia pipientis subsp. Culex pipiens (strain wPip).